The primary structure comprises 356 residues: uncharacterized protein (356 aa).

Position 37–44 (37–44) interacts with NADP(+); it reads TGASSGIG. Residue S168 participates in substrate binding. The active-site Proton acceptor is Y181.

It belongs to the short-chain dehydrogenases/reductases (SDR) family.

This is an uncharacterized protein from Bacillus subtilis (strain 168).